The primary structure comprises 126 residues: 13 kDa ribonucleoprotein-associated protein (126 aa).

It belongs to the eukaryotic ribosomal protein eL8 family. As to quaternary structure, component of the U3 snoRNP particle. Binds to the C'/D and B/C motifs in U3 snoRNA. Component of the 25S U4/U6.U5 tri-snRNP particle, a subcomplex of the spliceosome. Binds to the 5' stem-loop of U4 snRNA.

It localises to the nucleus. The protein resides in the nucleolus. In terms of biological role, common component of the spliceosome and rRNA processing machinery. In association with the spliceosomal U4/U6.U5 tri-snRNP particle, required for splicing of pre-mRNA. In association with box C/D snoRNPs, required for processing of pre-ribosomal RNA (rRNA) and site-specific 2'-O-methylation of substrate RNAs. Essential for the accumulation and stability of U4 snRNA, U6 snRNA, and box C/D snoRNAs. This Yarrowia lipolytica (strain CLIB 122 / E 150) (Yeast) protein is 13 kDa ribonucleoprotein-associated protein (SNU13).